A 241-amino-acid polypeptide reads, in one-letter code: ATP synthase subunit a (241 aa).

5 consecutive transmembrane segments (helical) span residues 30–50 (GQVFLTSWIVIGAILALVVVG), 91–111 (FIGTLFLFIFVSNWGGSLVPW), 128–148 (INTTVALALLVSLSYFYAGLS), 193–213 (LVVAVLVFLVPLFLPVPVMFL), and 214–234 (GLFTSAIQALIFATLAAYYIG).

The protein belongs to the ATPase A chain family. In terms of assembly, F-type ATPases have 2 components, CF(1) - the catalytic core - and CF(0) - the membrane proton channel. CF(1) has five subunits: alpha(3), beta(3), gamma(1), delta(1), epsilon(1). CF(0) has four main subunits: a, b, b' and c.

Its subcellular location is the cellular thylakoid membrane. Its function is as follows. Key component of the proton channel; it plays a direct role in the translocation of protons across the membrane. The sequence is that of ATP synthase subunit a from Prochlorococcus marinus (strain MIT 9303).